A 249-amino-acid chain; its full sequence is tRNA (guanine-N(1)-)-methyltransferase (249 aa).

S-adenosyl-L-methionine is bound by residues Gly117 and Leu137–Leu142.

The protein belongs to the RNA methyltransferase TrmD family. As to quaternary structure, homodimer.

It is found in the cytoplasm. It catalyses the reaction guanosine(37) in tRNA + S-adenosyl-L-methionine = N(1)-methylguanosine(37) in tRNA + S-adenosyl-L-homocysteine + H(+). Functionally, specifically methylates guanosine-37 in various tRNAs. The protein is tRNA (guanine-N(1)-)-methyltransferase of Janthinobacterium sp. (strain Marseille) (Minibacterium massiliensis).